Consider the following 735-residue polypeptide: Ion-translocating oxidoreductase complex subunit C (735 aa).

4Fe-4S ferredoxin-type domains are found at residues 368–397 (MGAPQEEKSCIRCSACADACPADLLPQQLY) and 407–436 (KATAHHIADCIECGACAWVCPSNIPLVQYF). Positions 377, 380, 383, 387, 416, 419, 422, and 426 each coordinate [4Fe-4S] cluster. A disordered region spans residues 534 to 711 (QARAKQAAHP…EPVEPADPRK (178 aa)).

Belongs to the 4Fe4S bacterial-type ferredoxin family. RnfC subfamily. The complex is composed of six subunits: RsxA, RsxB, RsxC, RsxD, RsxE and RsxG. The cofactor is [4Fe-4S] cluster.

It localises to the cell inner membrane. Functionally, part of a membrane-bound complex that couples electron transfer with translocation of ions across the membrane. Required to maintain the reduced state of SoxR. This is Ion-translocating oxidoreductase complex subunit C from Salmonella paratyphi A (strain ATCC 9150 / SARB42).